The chain runs to 472 residues: 12S seed storage protein CRA1 (472 aa).

An N-terminal signal peptide occupies residues 1-24 (MARVSSLLSFCLTLLILFHGYAAQ). Intrachain disulfides connect Cys-36–Cys-69 and Cys-112–Cys-289. Residues 41 to 236 (LNALEPSHVL…ALKIDLQTAQ (196 aa)) enclose the Cupin type-1 1 domain. Position 115 is a phosphothreonine (Thr-115). Residues 259 to 283 (RPPLRGQRPQEEEEEEGRHGRHGNG) form a disordered region. Residues 295 to 444 (DNLDDPSRAD…GFQISPEEAR (150 aa)) enclose the Cupin type-1 2 domain. Tyr-312 bears the Phosphotyrosine mark. Position 314 is a phosphoserine (Ser-314). Residues Thr-408 and Thr-433 each carry the phosphothreonine modification.

This sequence belongs to the 11S seed storage protein (globulins) family. As to quaternary structure, hexamer; each subunit is composed of an acidic and a basic chain derived from a single precursor and linked by a disulfide bond. Post-translationally, phosphorylated in seeds on some Tyr residues in response to abscisic acid (ABA). Proteolytically processed during seed maturation at a conserved Asn-Gly peptide bond by an asparaginyl endopeptidase to produce two mature polypeptides referred to as alpha and beta subunits that are joined together by a disulfide bond. Accumulates in seeds 8 days after anthesis.

The protein localises to the protein storage vacuole. Its function is as follows. Seed storage protein. This Arabidopsis thaliana (Mouse-ear cress) protein is 12S seed storage protein CRA1 (CRA1).